Reading from the N-terminus, the 366-residue chain is Flagellar P-ring protein (366 aa).

Residues 1–19 (MTLIRLLACLLFLPCLAQA) form the signal peptide.

This sequence belongs to the FlgI family. As to quaternary structure, the basal body constitutes a major portion of the flagellar organelle and consists of four rings (L,P,S, and M) mounted on a central rod.

The protein resides in the periplasm. It localises to the bacterial flagellum basal body. Assembles around the rod to form the L-ring and probably protects the motor/basal body from shearing forces during rotation. In Ruegeria pomeroyi (strain ATCC 700808 / DSM 15171 / DSS-3) (Silicibacter pomeroyi), this protein is Flagellar P-ring protein.